A 68-amino-acid chain; its full sequence is Putative alpha-conotoxin Qc alphaL-1 (68 aa).

Residues 1–21 form the signal peptide; it reads MGMRMMFTMFLLVVLATTVVS. Positions 22-49 are excised as a propeptide; it reads INLDHAFDGRNAAANNKATDLMARTVRR. A disulfide bond links C51 and C64.

The protein belongs to the conotoxin A superfamily. As to expression, expressed by the venom duct.

It localises to the secreted. Alpha-conotoxins act on postsynaptic membranes, they bind to the nicotinic acetylcholine receptors (nAChR) and thus inhibit them. The protein is Putative alpha-conotoxin Qc alphaL-1 of Conus quercinus (Oak cone).